Here is a 148-residue protein sequence, read N- to C-terminus: Large ribosomal subunit protein bL9 (148 aa).

The protein belongs to the bacterial ribosomal protein bL9 family.

Binds to the 23S rRNA. The sequence is that of Large ribosomal subunit protein bL9 from Bacillus cytotoxicus (strain DSM 22905 / CIP 110041 / 391-98 / NVH 391-98).